Reading from the N-terminus, the 409-residue chain is uncharacterized protein (409 aa).

The next 12 helical transmembrane spans lie at 3-23 (IIVK…PTTE), 43-63 (ITQI…LSLG), 73-93 (PIVL…IFSV), 95-115 (IEML…GSVI), 135-155 (ILSP…GYII), 162-182 (YVFV…YKIL), 209-229 (ILWL…GFFI), 248-268 (KLAF…GYLI), 283-303 (FIFS…LEFI), 309-329 (LAIS…SLLI), 346-366 (TAGS…TYCV), and 379-399 (LLCL…CILY).

Belongs to the major facilitator superfamily. Bcr/CmlA family.

The protein resides in the cell inner membrane. This is an uncharacterized protein from Rickettsia typhi (strain ATCC VR-144 / Wilmington).